The primary structure comprises 236 residues: 2,3,4,5-tetrahydropyridine-2,6-dicarboxylate N-acetyltransferase (236 aa).

Belongs to the transferase hexapeptide repeat family. DapH subfamily.

It carries out the reaction (S)-2,3,4,5-tetrahydrodipicolinate + acetyl-CoA + H2O = L-2-acetamido-6-oxoheptanedioate + CoA. It functions in the pathway amino-acid biosynthesis; L-lysine biosynthesis via DAP pathway; LL-2,6-diaminopimelate from (S)-tetrahydrodipicolinate (acetylase route): step 1/3. Functionally, catalyzes the transfer of an acetyl group from acetyl-CoA to tetrahydrodipicolinate. The chain is 2,3,4,5-tetrahydropyridine-2,6-dicarboxylate N-acetyltransferase from Clostridium botulinum (strain 657 / Type Ba4).